The following is a 623-amino-acid chain: MPAFYGGKLTTFEDDEKESEYGYVRKVSGPVVVADGMAGAAMYELVRVGHDNLIGEIIRLEGDSATIQVYEETAGLTVNDPVLRTHKPLSVELGPGILGNIFDGIQRPLKTIARISGDVYIPRGVSVPALDKDCLWEFQPNKFVEGDTITGGDLYATVFENTLMNHLVALPPDAMGKITYIAPAGQYSLKDTVIELEFQGIKKSYTMLQSWPVRTPRPVASKLAADTPLLTGQRVLDALFPSVLGGTCAIPGAFGCGKTVISQALSKYSNSDAVVYVGCGERGNEMAEVLMDFPQLTMTLPDGREESVMKRTTLVANTSNMPVAAREASIYTGITIAEYFRDMGYNVSMMADSTSRWAEALREISGRLAEMPADSGYPAYLAARLASFYERAGKVKCLGGPERNGSVTIVGAVSPPGGDFSDPVTSATLSIVQVFWGLDKKLAQRKHFPSVNWLISYSKYSTALESFYEKFDPDFINIRTKAREVLQREDDLNEIVQLVGKDALAEGDKITLETAKLLREDYLAQNAFTPYDKFCPFYKSVWMMRNIIHFYNLANQAVERAAGMDGQKITYTLIKHRLGDLFYRLVSQKFEDPAEGEDTLVEKFKKLYDDLNAGFRALEDETR.

252 to 259 is a binding site for ATP; it reads GAFGCGKT.

It belongs to the ATPase alpha/beta chains family. V-ATPase is a heteromultimeric enzyme composed of a peripheral catalytic V1 complex (components A to H) attached to an integral membrane V0 proton pore complex (components: a, c, c'', d and e). Binds to the deubiquitinating enzyme AMSH3.

It is found in the vacuole membrane. It carries out the reaction ATP + H2O + 4 H(+)(in) = ADP + phosphate + 5 H(+)(out). Its function is as follows. Catalytic subunit of the peripheral V1 complex of vacuolar ATPase. V-ATPase vacuolar ATPase is responsible for acidifying a variety of intracellular compartments in eukaryotic cells. The sequence is that of V-type proton ATPase catalytic subunit A (VHA-A) from Arabidopsis thaliana (Mouse-ear cress).